We begin with the raw amino-acid sequence, 410 residues long: MKQDIIDRLTRYVTIDTQSNPESTTTPSTEKQWDLLNLLNDELTDLGLETDIDEQGYLFATLDSNVDIDLPTVGFLAHIDTSPDFNASHVNPQIIDNYDGTPIQLGKTNRTLSQDVFPAMKNVEGHTLMITDGTSLLGADDKAGVVEIMEALKYLTSHPEIKHGKIRVAFTPDEEIGRGPHEFDVERFNADFAYTMDGSEYGELQYESFNAAEAIVTCHGVNVHPGSAKDAMINAVLLGQQFNALLPQNEVPERTEGYEGFYHLMKINGDVEKTTLQYIIRDHDRNEFELRKKRLVEIKNDINSHFEDEPIEVEINDQYYNMGEKIEPNPHVIDIPKRVFEKLGIPANTAPIRGGTDGSQLSYMGLPTPNIFTGCDNFHGPFEYASIDVMEKAVQVVVGIAEEVVNTYDK.

His-78 lines the Zn(2+) pocket. Asp-80 is a catalytic residue. Asp-140 serves as a coordination point for Zn(2+). The Proton acceptor role is filled by Glu-174. Zn(2+) is bound by residues Glu-175, Asp-197, and His-379.

This sequence belongs to the peptidase M20B family. Zn(2+) is required as a cofactor.

The protein resides in the cytoplasm. The enzyme catalyses Release of the N-terminal residue from a tripeptide.. In terms of biological role, cleaves the N-terminal amino acid of tripeptides. This Staphylococcus saprophyticus subsp. saprophyticus (strain ATCC 15305 / DSM 20229 / NCIMB 8711 / NCTC 7292 / S-41) protein is Peptidase T.